The chain runs to 700 residues: Beta-galactosidase Bga (700 aa).

Residue R103 coordinates substrate. C107 serves as a coordination point for Zn(2+). Residue N141 participates in substrate binding. The active-site Proton donor is E142. Residues C151, C153, and C156 each contribute to the Zn(2+) site. E312 serves as the catalytic Nucleophile. Substrate is bound by residues W320 and 360-363; that span reads EQYH. The span at 648 to 658 shows a compositional bias: acidic residues; sequence DPESLAVDDTD. The interval 648-674 is disordered; it reads DPESLAVDDTDRDGFDPMADDDKDSSA.

Belongs to the glycosyl hydrolase 42 family.

The enzyme catalyses Hydrolysis of terminal non-reducing beta-D-galactose residues in beta-D-galactosides.. Its activity is regulated as follows. Requires 4 M NaCl or KCl for maximal activity. Functionally, cleaves o-nitrophenyl-beta-D-galactopyranoside (ONPG) in vitro. The chain is Beta-galactosidase Bga from Halorubrum lacusprofundi (strain ATCC 49239 / DSM 5036 / JCM 8891 / ACAM 34).